The primary structure comprises 138 residues: Protein SPMIP3 (138 aa).

The sequence is that of Protein SPMIP3 (SPMIP3) from Bos taurus (Bovine).